The chain runs to 244 residues: Large ribosomal subunit protein uL30A (244 aa).

The disordered stretch occupies residues 1 to 26; that stretch reads MAAEKILTPESQLKKSKAQQKTAEQV.

The protein belongs to the universal ribosomal protein uL30 family. As to quaternary structure, component of the large ribosomal subunit (LSU). Mature yeast ribosomes consist of a small (40S) and a large (60S) subunit. The 40S small subunit contains 1 molecule of ribosomal RNA (18S rRNA) and 33 different proteins (encoded by 57 genes). The large 60S subunit contains 3 rRNA molecules (25S, 5.8S and 5S rRNA) and 46 different proteins (encoded by 81 genes).

The protein localises to the cytoplasm. Its function is as follows. Component of the ribosome, a large ribonucleoprotein complex responsible for the synthesis of proteins in the cell. The small ribosomal subunit (SSU) binds messenger RNAs (mRNAs) and translates the encoded message by selecting cognate aminoacyl-transfer RNA (tRNA) molecules. The large subunit (LSU) contains the ribosomal catalytic site termed the peptidyl transferase center (PTC), which catalyzes the formation of peptide bonds, thereby polymerizing the amino acids delivered by tRNAs into a polypeptide chain. The nascent polypeptides leave the ribosome through a tunnel in the LSU and interact with protein factors that function in enzymatic processing, targeting, and the membrane insertion of nascent chains at the exit of the ribosomal tunnel. This chain is Large ribosomal subunit protein uL30A, found in Saccharomyces cerevisiae (strain ATCC 204508 / S288c) (Baker's yeast).